The following is a 1464-amino-acid chain: Glutamate receptor ionotropic, NMDA 2A (1464 aa).

A signal peptide spans Met-1–Ala-22. Residues Pro-23–Ser-556 lie on the Extracellular side of the membrane. Position 44 (His-44) interacts with Zn(2+). A glycan (N-linked (GlcNAc...) asparagine) is linked at Asn-75. Cys-87 and Cys-320 are disulfide-bonded. Zn(2+) contacts are provided by His-128, Glu-266, and Asp-282. N-linked (GlcNAc...) asparagine glycosylation is found at Asn-340, Asn-380, Asn-443, and Asn-444. Cystine bridges form between Cys-429/Cys-455 and Cys-436/Cys-456. 3 residues coordinate L-glutamate: Ser-511, Thr-513, and Arg-518. Asn-541 is a glycosylation site (N-linked (GlcNAc...) asparagine). The chain crosses the membrane as a helical span at residues Val-557–Phe-576. The Cytoplasmic portion of the chain corresponds to Glu-577–Thr-600. The segment at Phe-599 to Gln-620 is pore-forming. Positions Ile-601 to Asn-615 form an intramembrane region, discontinuously helical. Over Ser-616–Thr-625 the chain is Cytoplasmic. The helical transmembrane segment at Thr-626–Thr-646 threads the bilayer. At Ala-647 to Ile-814 the chain is on the extracellular side. Asn-687 carries an N-linked (GlcNAc...) asparagine glycan. Residues Ser-689, Thr-690, and Asp-731 each contribute to the L-glutamate site. An intrachain disulfide couples Cys-745 to Cys-800. Residues Asp-815–Phe-835 form a helical membrane-spanning segment. Residues Ile-836–Val-1464 lie on the Cytoplasmic side of the membrane. Phosphoserine occurs at positions 882, 890, and 929. 2 stretches are compositionally biased toward polar residues: residues Ser-1001 to Pro-1010 and Gln-1023 to Ser-1032. Disordered stretches follow at residues Ser-1001–Arg-1088 and Pro-1148–Asn-1180. Position 1025 is a phosphoserine (Ser-1025). 2 stretches are compositionally biased toward basic and acidic residues: residues Gln-1033–Thr-1043 and Leu-1052–Ile-1061. Phosphoserine occurs at positions 1059 and 1062. The span at Cys-1070–Lys-1087 shows a compositional bias: basic and acidic residues. Positions Leu-1165 to Asn-1180 are enriched in polar residues. Phosphoserine is present on residues Ser-1198 and Ser-1291. Residues Lys-1335–Arg-1372 form a disordered region. The PDZ-binding signature appears at Ser-1462–Val-1464.

Belongs to the glutamate-gated ion channel (TC 1.A.10.1) family. NR2A/GRIN2A subfamily. Heterotetramer. Forms heterotetrameric channels composed of two GluN1/zeta subunits (GRIN1), and two identical GluN2/epsilon subunits (GRIN2A, GRIN2B, GRIN2C or GRIN2D) or GluN3 subunits (GRIN3A or GRIN3B) (in vitro). Can also form heterotetrameric channels that contain at least two GluN1 subunits and at least two different GluN2 subunits (or a combination of one GluN2 and one GluN3 subunits) (in vitro). In vivo, the subunit composition may depend on the expression levels of the different subunits. Found in a complex with GRIN1, GRIN3A and PPP2CB. Found in a complex with GRIN1 and GRIN3B. Interacts with AIP1. Interacts with HIP1 and NETO1. Interacts with SNX27 (via PDZ domain); the interaction is required for recycling to the plasma membrane when endocytosed and prevent degradation in lysosomes. Interacts with PDZ domains of PATJ and DLG4. Interacts with LRFN2. Interacts with RPH3A and DLG4; this ternary complex regulates NMDA receptor composition at postsynaptic membranes. Interacts with SORCS2. Interacts with ARC; preventing ARC oligomerization. Interacts (via the extreme C-terminus) with FRMPD2 (the second PDZ domain); the interaction is direct and is likely to promote NMDAR-mediated neural signal transmission. GRIN2A binds FRMPD2 with lower affinity than GRIN2B.

The protein localises to the cell projection. It is found in the dendritic spine. Its subcellular location is the cell membrane. It localises to the synapse. The protein resides in the postsynaptic cell membrane. The protein localises to the cytoplasmic vesicle membrane. It catalyses the reaction Ca(2+)(in) = Ca(2+)(out). It carries out the reaction Na(+)(in) = Na(+)(out). The enzyme catalyses K(+)(in) = K(+)(out). Functionally, component of N-methyl-D-aspartate (NMDA) receptors (NMDARs) that function as heterotetrameric, ligand-gated cation channels with high calcium permeability and voltage-dependent block by Mg(2+). NMDARs participate in synaptic plasticity for learning and memory formation by contributing to the slow phase of excitatory postsynaptic current, long-term synaptic potentiation, and learning. Channel activation requires binding of the neurotransmitter L-glutamate to the GluN2 subunit, glycine or D-serine binding to the GluN1 subunit, plus membrane depolarization to eliminate channel inhibition by Mg(2+). NMDARs mediate simultaneously the potasium efflux and the influx of calcium and sodium. Each GluN2 subunit confers differential attributes to channel properties, including activation, deactivation and desensitization kinetics, pH sensitivity, Ca2(+) permeability, and binding to allosteric modulators. Participates in the synaptic plasticity regulation through activation by the L-glutamate releaseed by BEST1, into the synaptic cleft, upon F2R/PAR-1 activation in astrocyte. This is Glutamate receptor ionotropic, NMDA 2A from Pan troglodytes (Chimpanzee).